The following is a 240-amino-acid chain: tRNA (guanine-N(1)-)-methyltransferase (240 aa).

Residues Gly110 and 129-134 (LGDFVL) each bind S-adenosyl-L-methionine.

Belongs to the RNA methyltransferase TrmD family. As to quaternary structure, homodimer.

The protein resides in the cytoplasm. It catalyses the reaction guanosine(37) in tRNA + S-adenosyl-L-methionine = N(1)-methylguanosine(37) in tRNA + S-adenosyl-L-homocysteine + H(+). Functionally, specifically methylates guanosine-37 in various tRNAs. This Clostridium botulinum (strain Langeland / NCTC 10281 / Type F) protein is tRNA (guanine-N(1)-)-methyltransferase.